Reading from the N-terminus, the 260-residue chain is 3'-5' ssDNA/RNA exonuclease TatD (260 aa).

A divalent metal cation contacts are provided by Glu91, His127, and His152.

The protein belongs to the metallo-dependent hydrolases superfamily. TatD-type hydrolase family. TatD subfamily. Monomer. Mg(2+) serves as cofactor.

It localises to the cytoplasm. Its function is as follows. 3'-5' exonuclease that prefers single-stranded DNA and RNA. May play a role in the H(2)O(2)-induced DNA damage repair. The sequence is that of 3'-5' ssDNA/RNA exonuclease TatD from Salmonella typhimurium (strain LT2 / SGSC1412 / ATCC 700720).